The following is a 288-amino-acid chain: DNA repair protein RecO (288 aa).

Belongs to the RecO family.

Its function is as follows. Involved in DNA repair and RecF pathway recombination. The sequence is that of DNA repair protein RecO from Trichodesmium erythraeum (strain IMS101).